We begin with the raw amino-acid sequence, 515 residues long: ATP synthase subunit alpha (515 aa).

Position 169–176 (169–176 (GDRQTGKT)) interacts with ATP.

The protein belongs to the ATPase alpha/beta chains family. As to quaternary structure, F-type ATPases have 2 components, CF(1) - the catalytic core - and CF(0) - the membrane proton channel. CF(1) has five subunits: alpha(3), beta(3), gamma(1), delta(1), epsilon(1). CF(0) has three main subunits: a(1), b(2) and c(9-12). The alpha and beta chains form an alternating ring which encloses part of the gamma chain. CF(1) is attached to CF(0) by a central stalk formed by the gamma and epsilon chains, while a peripheral stalk is formed by the delta and b chains.

Its subcellular location is the cell inner membrane. The enzyme catalyses ATP + H2O + 4 H(+)(in) = ADP + phosphate + 5 H(+)(out). Functionally, produces ATP from ADP in the presence of a proton gradient across the membrane. The alpha chain is a regulatory subunit. The chain is ATP synthase subunit alpha from Neisseria gonorrhoeae (strain ATCC 700825 / FA 1090).